A 235-amino-acid chain; its full sequence is 7-cyano-7-deazaguanine synthase (235 aa).

11–21 (FSGGQDSTTCV) contributes to the ATP binding site. Residues Cys199, Cys214, Cys217, and Cys220 each coordinate Zn(2+).

The protein belongs to the QueC family. Zn(2+) serves as cofactor.

The catalysed reaction is 7-carboxy-7-deazaguanine + NH4(+) + ATP = 7-cyano-7-deazaguanine + ADP + phosphate + H2O + H(+). It participates in purine metabolism; 7-cyano-7-deazaguanine biosynthesis. Functionally, catalyzes the ATP-dependent conversion of 7-carboxy-7-deazaguanine (CDG) to 7-cyano-7-deazaguanine (preQ(0)). The polypeptide is 7-cyano-7-deazaguanine synthase (Janthinobacterium sp. (strain Marseille) (Minibacterium massiliensis)).